The sequence spans 589 residues: Actin-histidine N-methyltransferase (589 aa).

The interval 1-22 (MGKKSRVKTQKSGTGATATVSP) is disordered. Over residues 10–20 (QKSGTGATATV) the composition is skewed to polar residues. Residues R75, 104–106 (EGF), R254, 275–279 (DMCNH), and 325–327 (SGF) each bind S-adenosyl-L-methionine. Positions 94–314 (EGFEMVNFKE…AGEQIYIFYG (221 aa)) constitute an SET domain. S513 is subject to Phosphoserine. The segment at 547-589 (LVNGERSFPNGTRSEEDLKQEERKRAKGDAKESSSDSTDAVKE) is disordered. The segment covering 559–589 (RSEEDLKQEERKRAKGDAKESSSDSTDAVKE) has biased composition (basic and acidic residues).

Belongs to the class V-like SAM-binding methyltransferase superfamily. SETD3 actin-histidine methyltransferase family. As to quaternary structure, interacts with MYOD1. In terms of processing, phosphorylated by GSK3B, which is required for recognition by the SCF(FBXW7) complex and subsequent degradation. Post-translationally, ubiquitinated by the SCF(FBXW7) complex following phosphorylation by GSK3B, leading to its degradation by the proteasome.

Its subcellular location is the cytoplasm. The protein localises to the nucleus. The catalysed reaction is L-histidyl-[protein] + S-adenosyl-L-methionine = N(tele)-methyl-L-histidyl-[protein] + S-adenosyl-L-homocysteine + H(+). Protein-histidine N-methyltransferase that specifically mediates 3-methylhistidine (tele-methylhistidine) methylation of actin at 'His-73'. Histidine methylation of actin is required for smooth muscle contraction of the laboring uterus during delivery. Does not have protein-lysine N-methyltransferase activity and probably only catalyzes histidine methylation of actin. This chain is Actin-histidine N-methyltransferase, found in Dasypus novemcinctus (Nine-banded armadillo).